Consider the following 225-residue polypeptide: UPF0758 protein Shew185_0376 (225 aa).

The MPN domain maps to Val102–Ile224. Zn(2+)-binding residues include His173, His175, and Asp186. The JAMM motif motif lies at His173–Asp186.

This sequence belongs to the UPF0758 family.

The protein is UPF0758 protein Shew185_0376 of Shewanella baltica (strain OS185).